The chain runs to 477 residues: Ribulose bisphosphate carboxylase large chain (477 aa).

A propeptide spanning residues methionine 1 to serine 2 is cleaved from the precursor. Residue proline 3 is modified to N-acetylproline. At lysine 14 the chain carries N6,N6,N6-trimethyllysine. Substrate is bound by residues asparagine 123 and threonine 173. Lysine 175 serves as the catalytic Proton acceptor. Residue lysine 177 participates in substrate binding. Residues lysine 201, aspartate 203, and glutamate 204 each contribute to the Mg(2+) site. Lysine 201 is subject to N6-carboxylysine. The active-site Proton acceptor is the histidine 294. Positions 295, 327, and 379 each coordinate substrate.

Belongs to the RuBisCO large chain family. Type I subfamily. In terms of assembly, heterohexadecamer of 8 large chains and 8 small chains; disulfide-linked. The disulfide link is formed within the large subunit homodimers. The cofactor is Mg(2+). Post-translationally, the disulfide bond which can form in the large chain dimeric partners within the hexadecamer appears to be associated with oxidative stress and protein turnover.

It is found in the plastid. The protein localises to the chloroplast. The catalysed reaction is 2 (2R)-3-phosphoglycerate + 2 H(+) = D-ribulose 1,5-bisphosphate + CO2 + H2O. It carries out the reaction D-ribulose 1,5-bisphosphate + O2 = 2-phosphoglycolate + (2R)-3-phosphoglycerate + 2 H(+). RuBisCO catalyzes two reactions: the carboxylation of D-ribulose 1,5-bisphosphate, the primary event in carbon dioxide fixation, as well as the oxidative fragmentation of the pentose substrate in the photorespiration process. Both reactions occur simultaneously and in competition at the same active site. This is Ribulose bisphosphate carboxylase large chain from Oryza nivara (Indian wild rice).